The primary structure comprises 265 residues: Esterase claE (265 aa).

Active-site charge relay system residues include Ser-121, Asp-211, and His-239.

The protein belongs to the LovG family.

It participates in secondary metabolite biosynthesis. Functionally, esterase; part of the cla gene cluster that produces clavatol and ortho-quinone methide. The clavatol biosynthesis cluster cla and the terrestric acid cluster tra are both involved in the production of peniphenones and penilactones. The non-reducing PKS claF is responsible for the formation of clavatol from successive condensations of 3 malonyl-CoA units, presumably with a simple acetyl-CoA starter unit, and 2 methylation steps. The esterase claE probably collaborates with claF by catalyzing the hydrolysis of ACP-bound acyl intermediates to free the ACP from stalled intermediates. The clavatol oxidase claD then converts clavatol to hydroxyclavatol. Spontaneous dehydration of hydroxyclavatol leads to the accumulation of the highly active ortho-quinone methide. On the other hand, the PKS-NRPS hybrid traA is involved in the formation of crustosic acid, with the help of traB and traD. The polyketide synthase module (PKS) of traA is responsible for the synthesis of the polyketide backbone via the condensation of an acetyl-CoA starter unit with 3 malonyl-CoA units. The downstream nonribosomal peptide synthetase (NRPS) module then amidates the carboxyl end of the polyketide with L-malic acid. Because traA lacks a designated enoylreductase (ER) domain, the required activity is provided the enoyl reductase traG. Crustosic acid undergoes decarboxylation and isomerization to the terrestric acid, catalyzed by the 2-oxoglutarate-dependent dioxygenase traH. Both acids are further converted to the 2 gamma-butyrolactones (R)-5-methyltetronic acid and (S)-5-carboxylmethyltetronic acid, with involvement of the cytochrome P450 monooxygenase claJ. Spontaneous addition of the methide to these gamma-butyrolactones leads to peniphenone D and penilactone D, which undergo again stereospecific attacking by methide to give penilactones A and B. This chain is Esterase claE, found in Penicillium crustosum (Blue mold fungus).